Here is a 269-residue protein sequence, read N- to C-terminus: Shikimate dehydrogenase (NADP(+)) (269 aa).

Residues 17–19 and threonine 64 contribute to the shikimate site; that span reads SKS. Lysine 68 functions as the Proton acceptor in the catalytic mechanism. Residue glutamate 80 participates in NADP(+) binding. Shikimate-binding residues include asparagine 89 and aspartate 105. NADP(+) contacts are provided by residues 130 to 134, 154 to 159, and methionine 213; these read GAGGA and NRTHTK. Tyrosine 215 serves as a coordination point for shikimate. Glycine 237 serves as a coordination point for NADP(+).

This sequence belongs to the shikimate dehydrogenase family. As to quaternary structure, homodimer.

It carries out the reaction shikimate + NADP(+) = 3-dehydroshikimate + NADPH + H(+). It participates in metabolic intermediate biosynthesis; chorismate biosynthesis; chorismate from D-erythrose 4-phosphate and phosphoenolpyruvate: step 4/7. In terms of biological role, involved in the biosynthesis of the chorismate, which leads to the biosynthesis of aromatic amino acids. Catalyzes the reversible NADPH linked reduction of 3-dehydroshikimate (DHSA) to yield shikimate (SA). This Neisseria mucosa protein is Shikimate dehydrogenase (NADP(+)).